A 208-amino-acid polypeptide reads, in one-letter code: Imidazole glycerol phosphate synthase subunit HisH (208 aa).

Residues 1–206 form the Glutamine amidotransferase type-1 domain; sequence MIVIIDYDTG…KEVTESCKSS (206 aa). Residue C79 is the Nucleophile of the active site. Residues H181 and E183 contribute to the active site.

As to quaternary structure, heterodimer of HisH and HisF.

It localises to the cytoplasm. The catalysed reaction is 5-[(5-phospho-1-deoxy-D-ribulos-1-ylimino)methylamino]-1-(5-phospho-beta-D-ribosyl)imidazole-4-carboxamide + L-glutamine = D-erythro-1-(imidazol-4-yl)glycerol 3-phosphate + 5-amino-1-(5-phospho-beta-D-ribosyl)imidazole-4-carboxamide + L-glutamate + H(+). The enzyme catalyses L-glutamine + H2O = L-glutamate + NH4(+). The protein operates within amino-acid biosynthesis; L-histidine biosynthesis; L-histidine from 5-phospho-alpha-D-ribose 1-diphosphate: step 5/9. IGPS catalyzes the conversion of PRFAR and glutamine to IGP, AICAR and glutamate. The HisH subunit catalyzes the hydrolysis of glutamine to glutamate and ammonia as part of the synthesis of IGP and AICAR. The resulting ammonia molecule is channeled to the active site of HisF. The protein is Imidazole glycerol phosphate synthase subunit HisH of Listeria innocua serovar 6a (strain ATCC BAA-680 / CLIP 11262).